We begin with the raw amino-acid sequence, 327 residues long: Ribosomal RNA large subunit methyltransferase F (327 aa).

Residues 1–31 (MTHPVTPKNTTRPTPANKPAASTLHPRNPHQ) form a disordered region.

It belongs to the methyltransferase superfamily. METTL16/RlmF family.

It is found in the cytoplasm. The enzyme catalyses adenosine(1618) in 23S rRNA + S-adenosyl-L-methionine = N(6)-methyladenosine(1618) in 23S rRNA + S-adenosyl-L-homocysteine + H(+). Its function is as follows. Specifically methylates the adenine in position 1618 of 23S rRNA. This Psychrobacter sp. (strain PRwf-1) protein is Ribosomal RNA large subunit methyltransferase F.